A 232-amino-acid polypeptide reads, in one-letter code: Small ribosomal subunit protein uS3 (232 aa).

The KH type-2 domain occupies 39-107; that stretch reads VRQFLTSELK…PAQINIAEVR (69 aa). A disordered region spans residues 213 to 232; it reads AANAVEPKGDKPKKQRKGRK.

This sequence belongs to the universal ribosomal protein uS3 family. In terms of assembly, part of the 30S ribosomal subunit. Forms a tight complex with proteins S10 and S14.

Functionally, binds the lower part of the 30S subunit head. Binds mRNA in the 70S ribosome, positioning it for translation. In Vibrio parahaemolyticus serotype O3:K6 (strain RIMD 2210633), this protein is Small ribosomal subunit protein uS3.